A 206-amino-acid polypeptide reads, in one-letter code: 3-demethoxyubiquinol 3-hydroxylase (206 aa).

6 residues coordinate Fe cation: Glu-55, Glu-85, His-88, Glu-137, Glu-169, and His-172.

The protein belongs to the COQ7 family. Requires Fe cation as cofactor.

The protein resides in the cell membrane. The enzyme catalyses a 5-methoxy-2-methyl-3-(all-trans-polyprenyl)benzene-1,4-diol + AH2 + O2 = a 3-demethylubiquinol + A + H2O. The protein operates within cofactor biosynthesis; ubiquinone biosynthesis. Functionally, catalyzes the hydroxylation of 2-nonaprenyl-3-methyl-6-methoxy-1,4-benzoquinol during ubiquinone biosynthesis. The sequence is that of 3-demethoxyubiquinol 3-hydroxylase from Laribacter hongkongensis (strain HLHK9).